The following is a 100-amino-acid chain: MIGLNHYLIVSGLLFCIGLAGMLKRKNILLLFFSTEIMLNAINIGFIAISKYTHNLDGQMFALFIIAIAASEVAIGLGLVILWFKKYKSLDIDSLNAMKG.

The next 3 membrane-spanning stretches (helical) occupy residues 1–21 (MIGLNHYLIVSGLLFCIGLAG), 28–48 (ILLLFFSTEIMLNAINIGFIA), and 64–84 (FIIAIAASEVAIGLGLVILWF).

It belongs to the complex I subunit 4L family. NDH-1 is composed of 14 different subunits. Subunits NuoA, H, J, K, L, M, N constitute the membrane sector of the complex.

It is found in the cell inner membrane. The catalysed reaction is a quinone + NADH + 5 H(+)(in) = a quinol + NAD(+) + 4 H(+)(out). NDH-1 shuttles electrons from NADH, via FMN and iron-sulfur (Fe-S) centers, to quinones in the respiratory chain. The immediate electron acceptor for the enzyme in this species is believed to be ubiquinone. Couples the redox reaction to proton translocation (for every two electrons transferred, four hydrogen ions are translocated across the cytoplasmic membrane), and thus conserves the redox energy in a proton gradient. The sequence is that of NADH-quinone oxidoreductase subunit K from Helicobacter pylori (strain G27).